The following is a 564-amino-acid chain: Proline--tRNA ligase (564 aa).

This sequence belongs to the class-II aminoacyl-tRNA synthetase family. ProS type 1 subfamily. Homodimer.

It localises to the cytoplasm. It catalyses the reaction tRNA(Pro) + L-proline + ATP = L-prolyl-tRNA(Pro) + AMP + diphosphate. Catalyzes the attachment of proline to tRNA(Pro) in a two-step reaction: proline is first activated by ATP to form Pro-AMP and then transferred to the acceptor end of tRNA(Pro). As ProRS can inadvertently accommodate and process non-cognate amino acids such as alanine and cysteine, to avoid such errors it has two additional distinct editing activities against alanine. One activity is designated as 'pretransfer' editing and involves the tRNA(Pro)-independent hydrolysis of activated Ala-AMP. The other activity is designated 'posttransfer' editing and involves deacylation of mischarged Ala-tRNA(Pro). The misacylated Cys-tRNA(Pro) is not edited by ProRS. The protein is Proline--tRNA ligase of Xanthomonas oryzae pv. oryzae (strain KACC10331 / KXO85).